A 159-amino-acid polypeptide reads, in one-letter code: Succinate dehydrogenase [ubiquinone] cytochrome b small subunit, mitochondrial (159 aa).

A mitochondrion-targeting transit peptide spans M1–H56. Residues S57 to S63 are Mitochondrial matrix-facing. Residues L64 to L85 traverse the membrane as a helical segment. The Mitochondrial intermembrane segment spans residues N86–A90. A helical transmembrane segment spans residues M91 to V111. H102 is a binding site for heme b. Residues T112–K122 are Mitochondrial matrix-facing. A ubiquinone is bound at residue Y114. A helical transmembrane segment spans residues A123–Y144. Residues H145–L159 lie on the Mitochondrial intermembrane side of the membrane.

Belongs to the CybS family. Component of complex II composed of four subunits: the flavoprotein (FP) SDHA, iron-sulfur protein (IP) SDHB, and a cytochrome b560 composed of SDHC and SDHD.

The protein localises to the mitochondrion inner membrane. Its pathway is carbohydrate metabolism; tricarboxylic acid cycle. Functionally, membrane-anchoring subunit of succinate dehydrogenase (SDH) that is involved in complex II of the mitochondrial electron transport chain and is responsible for transferring electrons from succinate to ubiquinone (coenzyme Q). SDH also oxidizes malate to the non-canonical enol form of oxaloacetate, enol-oxaloacetate. Enol-oxaloacetate, which is a potent inhibitor of the succinate dehydrogenase activity, is further isomerized into keto-oxaloacetate. This chain is Succinate dehydrogenase [ubiquinone] cytochrome b small subunit, mitochondrial (SDHD), found in Homo sapiens (Human).